A 372-amino-acid polypeptide reads, in one-letter code: PqqA peptide cyclase (372 aa).

One can recognise a Radical SAM core domain in the interval 4-219; it reads APPPLSVLLE…VDTARRELGD (216 aa). [4Fe-4S] cluster-binding residues include C18, C22, and C25. The tract at residues 342–372 is disordered; the sequence is ATAEREAAAPAPEFIYRRPERPAPATADTLE.

Belongs to the radical SAM superfamily. PqqE family. In terms of assembly, interacts with PqqD. The interaction is necessary for activity of PqqE. The cofactor is [4Fe-4S] cluster.

The enzyme catalyses [PQQ precursor protein] + S-adenosyl-L-methionine = E-Y cross-linked-[PQQ precursor protein] + 5'-deoxyadenosine + L-methionine + H(+). The protein operates within cofactor biosynthesis; pyrroloquinoline quinone biosynthesis. Functionally, catalyzes the cross-linking of a glutamate residue and a tyrosine residue in the PqqA protein as part of the biosynthesis of pyrroloquinoline quinone (PQQ). The polypeptide is PqqA peptide cyclase (Xanthomonas oryzae pv. oryzae (strain MAFF 311018)).